The following is a 142-amino-acid chain: MKRWEHYEHTADIGIRGYGDSLEEAFEAVAIALFDVIVNVNKVEKKEVREVEVEGEDLESLLYNFLEELLVIHDIEGLVFRDFEVKIEKTEKGYKLKAKAYGEKLDPEKHEPKEEVKAITYHDMKIEKLPDGRWMAQLVPDI.

Ca(2+)-binding residues include aspartate 12, aspartate 141, and isoleucine 142.

It belongs to the archease family. In terms of assembly, in solution, exists as a monomer, trimer and hexamer. Oligomeric states form a tripartite complex with tRNA and PAB1947 methyltransferase.

Its function is as follows. Activates the tRNA-splicing ligase complex by facilitating the enzymatic turnover of catalytic subunit RtcB. Acts by promoting the guanylylation of RtcB, a key intermediate step in tRNA ligation. Can also alter the NTP specificity of RtcB such that ATP, dGTP or ITP is used efficiently. Chaperone or modulator of proteins involved in DNA or RNA processing. Protects the tRNA (cytosine-5-)-methyltransferase PAB1947 against aggregation and increases its specificity. The sequence is that of Protein archease from Pyrococcus abyssi (strain GE5 / Orsay).